We begin with the raw amino-acid sequence, 820 residues long: G-type lectin S-receptor-like serine/threonine-protein kinase At1g11280 (820 aa).

The signal sequence occupies residues 1–28 (MGIHLGEIGIVLFPWFLWLSLFLSCGYA). The 120-residue stretch at 29–148 (AITISSPLTL…VSENLLWQSF (120 aa)) folds into the Bulb-type lectin domain. Over 29 to 434 (AITISSPLTL…SELAGSRRTK (406 aa)) the chain is Extracellular. 5 N-linked (GlcNAc...) asparagine glycosylation sites follow: Asn57, Asn92, Asn98, Asn241, and Asn272. The EGF-like domain maps to 283-319 (PANLCDLYGACGPFGLCVTSNPTKCKCMKGFVPKYKE). Cystine bridges form between Cys287/Cys299 and Cys293/Cys307. 3 N-linked (GlcNAc...) asparagine glycosylation sites follow: Asn325, Asn341, and Asn384. In terms of domain architecture, PAN spans 338-422 (CQANLSTKTQ…VGGEFLSIRL (85 aa)). Intrachain disulfides connect Cys377-Cys398 and Cys381-Cys387. The helical transmembrane segment at 435-455 (IIVGSISLSIFVILAFGSYKY) threads the bilayer. The Cytoplasmic portion of the chain corresponds to 456-820 (WRYRAKQNVG…HVTQTEIYGR (365 aa)). The Protein kinase domain maps to 505–792 (FNVSNKLGQG…DLPRPKQPLF (288 aa)). Residues 511–519 (LGQGGFGPV) and Lys533 each bind ATP. Residues Ser539 and Ser554 each carry the phosphoserine modification. The caM-binding stretch occupies residues 594–611 (TLKLQIDWPKRFNIIQGV). Asp630 acts as the Proton acceptor in catalysis. Phosphoserine is present on residues Ser634 and Ser647. Position 664 is a phosphothreonine (Thr664). Phosphoserine is present on residues Ser707, Ser708, and Ser808. Thr815 carries the post-translational modification Phosphothreonine.

The protein belongs to the protein kinase superfamily. Ser/Thr protein kinase family.

The protein localises to the cell membrane. The catalysed reaction is L-seryl-[protein] + ATP = O-phospho-L-seryl-[protein] + ADP + H(+). It catalyses the reaction L-threonyl-[protein] + ATP = O-phospho-L-threonyl-[protein] + ADP + H(+). The chain is G-type lectin S-receptor-like serine/threonine-protein kinase At1g11280 from Arabidopsis thaliana (Mouse-ear cress).